Consider the following 207-residue polypeptide: Thiamine-phosphate synthase (207 aa).

4-amino-2-methyl-5-(diphosphooxymethyl)pyrimidine contacts are provided by residues 35-39 (QYRDK) and asparagine 67. Aspartate 68 and aspartate 86 together coordinate Mg(2+). Threonine 105 is a 4-amino-2-methyl-5-(diphosphooxymethyl)pyrimidine binding site. 2-[(2R,5Z)-2-carboxy-4-methylthiazol-5(2H)-ylidene]ethyl phosphate is bound at residue 132-134 (SVT). Residue lysine 135 coordinates 4-amino-2-methyl-5-(diphosphooxymethyl)pyrimidine. Glycine 162 lines the 2-[(2R,5Z)-2-carboxy-4-methylthiazol-5(2H)-ylidene]ethyl phosphate pocket.

This sequence belongs to the thiamine-phosphate synthase family. Requires Mg(2+) as cofactor.

The enzyme catalyses 2-[(2R,5Z)-2-carboxy-4-methylthiazol-5(2H)-ylidene]ethyl phosphate + 4-amino-2-methyl-5-(diphosphooxymethyl)pyrimidine + 2 H(+) = thiamine phosphate + CO2 + diphosphate. It catalyses the reaction 2-(2-carboxy-4-methylthiazol-5-yl)ethyl phosphate + 4-amino-2-methyl-5-(diphosphooxymethyl)pyrimidine + 2 H(+) = thiamine phosphate + CO2 + diphosphate. It carries out the reaction 4-methyl-5-(2-phosphooxyethyl)-thiazole + 4-amino-2-methyl-5-(diphosphooxymethyl)pyrimidine + H(+) = thiamine phosphate + diphosphate. It participates in cofactor biosynthesis; thiamine diphosphate biosynthesis; thiamine phosphate from 4-amino-2-methyl-5-diphosphomethylpyrimidine and 4-methyl-5-(2-phosphoethyl)-thiazole: step 1/1. Its function is as follows. Condenses 4-methyl-5-(beta-hydroxyethyl)thiazole monophosphate (THZ-P) and 2-methyl-4-amino-5-hydroxymethyl pyrimidine pyrophosphate (HMP-PP) to form thiamine monophosphate (TMP). The sequence is that of Thiamine-phosphate synthase from Pseudomonas putida (strain GB-1).